The following is a 66-amino-acid chain: Light-harvesting protein B-800-850 alpha chain B (66 aa).

The Cytoplasmic segment spans residues 1 to 11 (MNQGRIWTVVN). The chain crosses the membrane as a helical span at residues 12-35 (PGVGLPLLLGSVTVIAILVHYAVL). His-31 lines the a bacteriochlorophyll pocket. Topologically, residues 36–66 (SNTTWFPKYWNGATVAAPAAAPAPAAPAAKK) are periplasmic.

This sequence belongs to the antenna complex alpha subunit family. The core complex is formed by different alpha and beta chains, binding bacteriochlorophyll molecules, and arranged most probably in tetrameric structures disposed around the reaction center. The non-pigmented gamma chains may constitute additional components.

The protein resides in the cell inner membrane. Functionally, antenna complexes are light-harvesting systems, which transfer the excitation energy to the reaction centers. The polypeptide is Light-harvesting protein B-800-850 alpha chain B (pucAB) (Rhodopseudomonas palustris (strain ATCC BAA-98 / CGA009)).